The primary structure comprises 2104 residues: Replication polyprotein (2104 aa).

A run of 2 helical transmembrane segments spans residues 23 to 43 (LVAS…FASS) and 70 to 90 (FNPF…YAFI). Positions 289–313 (VRVGEIREKVATLRNKLNTLQTKEL) form a coiled coil. One can recognise an SF3 helicase domain in the interval 329 to 501 (LEVLLIEVKV…NKMPKRGAID (173 aa)). The interval 1499–1520 (GDCGSPIVLASGKKAGKLIGFH) is viral peptidase. One can recognise a RdRp catalytic domain in the interval 1838 to 1965 (PNYFDADYKN…SVSDEYKDKY (128 aa)).

Post-translationally, specific enzymatic cleavages in vivo yield mature proteins.

Its subcellular location is the membrane. The catalysed reaction is RNA(n) + a ribonucleoside 5'-triphosphate = RNA(n+1) + diphosphate. The peptidase activity is involved in polyprotein maturation, possibly along with hosts proteases. Transmembrane protein may be surface viral glycoprotein. RNA-directed RNA polymerase replicates the viral genome. This is Replication polyprotein from Drosophila melanogaster (Fruit fly).